Here is a 120-residue protein sequence, read N- to C-terminus: UPF0231 protein YacL (120 aa).

The protein belongs to the UPF0231 family.

The protein is UPF0231 protein YacL of Salmonella paratyphi A (strain ATCC 9150 / SARB42).